The primary structure comprises 498 residues: ATP synthase subunit beta, chloroplastic (498 aa).

Residue 172–179 participates in ATP binding; it reads GGAGVGKT.

Belongs to the ATPase alpha/beta chains family. F-type ATPases have 2 components, CF(1) - the catalytic core - and CF(0) - the membrane proton channel. CF(1) has five subunits: alpha(3), beta(3), gamma(1), delta(1), epsilon(1). CF(0) has four main subunits: a(1), b(1), b'(1) and c(9-12).

Its subcellular location is the plastid. The protein localises to the chloroplast thylakoid membrane. The enzyme catalyses ATP + H2O + 4 H(+)(in) = ADP + phosphate + 5 H(+)(out). In terms of biological role, produces ATP from ADP in the presence of a proton gradient across the membrane. The catalytic sites are hosted primarily by the beta subunits. The protein is ATP synthase subunit beta, chloroplastic of Coffea arabica (Arabian coffee).